We begin with the raw amino-acid sequence, 278 residues long: Pantothenate synthetase (278 aa).

27-34 contacts ATP; that stretch reads MGNLHEGH. H34 acts as the Proton donor in catalysis. Q58 serves as a coordination point for (R)-pantoate. Residue Q58 coordinates beta-alanine. 147 to 150 serves as a coordination point for ATP; it reads GEKD. A (R)-pantoate-binding site is contributed by Q153. Residue 184 to 187 coordinates ATP; the sequence is YSSR.

Belongs to the pantothenate synthetase family. In terms of assembly, homodimer.

The protein resides in the cytoplasm. The catalysed reaction is (R)-pantoate + beta-alanine + ATP = (R)-pantothenate + AMP + diphosphate + H(+). It functions in the pathway cofactor biosynthesis; (R)-pantothenate biosynthesis; (R)-pantothenate from (R)-pantoate and beta-alanine: step 1/1. Its function is as follows. Catalyzes the condensation of pantoate with beta-alanine in an ATP-dependent reaction via a pantoyl-adenylate intermediate. The chain is Pantothenate synthetase from Acidithiobacillus ferrooxidans (strain ATCC 23270 / DSM 14882 / CIP 104768 / NCIMB 8455) (Ferrobacillus ferrooxidans (strain ATCC 23270)).